A 545-amino-acid chain; its full sequence is Pectinesterase/pectinesterase inhibitor (545 aa).

Positions 1 to 37 (MEINQPNLLEASKSCYSKITFFLLVISFAALVSTGFS) are cleaved as a signal peptide. The segment at 38–191 (SPELSLHHKI…ILRARTSLAI (154 aa)) is pectinesterase inhibitor. Residues 38–228 (SPELSLHHKI…RRLLQTLGKD (191 aa)) constitute a propeptide that is removed on maturation. A glycan (N-linked (GlcNAc...) asparagine) is linked at Asn135. The interval 232-530 (DIVVAKDGSG…TVAELIQGGS (299 aa)) is pectinesterase. Thr307 and Gln337 together coordinate substrate. Residues Cys326 and Cys353 are joined by a disulfide bond. Catalysis depends on Asp360, which acts as the Proton donor; for pectinesterase activity. Asn375 carries an N-linked (GlcNAc...) (complex) asparagine glycan. The Nucleophile; for pectinesterase activity role is filled by Asp381. A disulfide bridge connects residues Cys394 and Cys428. Substrate-binding residues include Arg449 and Trp451.

In the N-terminal section; belongs to the PMEI family. This sequence in the C-terminal section; belongs to the pectinesterase family. In terms of processing, N-glycosylated.

Its subcellular location is the secreted. The protein resides in the cell wall. It catalyses the reaction [(1-&gt;4)-alpha-D-galacturonosyl methyl ester](n) + n H2O = [(1-&gt;4)-alpha-D-galacturonosyl](n) + n methanol + n H(+). The protein operates within glycan metabolism; pectin degradation; 2-dehydro-3-deoxy-D-gluconate from pectin: step 1/5. Functionally, acts in the modification of cell walls via demethylesterification of cell wall pectin. The polypeptide is Pectinesterase/pectinesterase inhibitor (Ficus pumila var. awkeotsang (Jelly fig)).